Consider the following 153-residue polypeptide: Arginine repressor (153 aa).

It belongs to the ArgR family.

The protein localises to the cytoplasm. Its pathway is amino-acid biosynthesis; L-arginine biosynthesis [regulation]. Regulates arginine biosynthesis genes. In Clostridium tetani (strain Massachusetts / E88), this protein is Arginine repressor.